The chain runs to 138 residues: Acidic phospholipase A2 homolog sistruxin A (138 aa).

The first 37 residues, 1–37, serve as a signal peptide directing secretion; sequence MRALWIVAVLLLGVEGSLVEFETLIMKIAGRSGVWYY. 7 disulfide bridges follow: cysteine 42/cysteine 131, cysteine 44/cysteine 60, cysteine 59/cysteine 111, cysteine 65/cysteine 138, cysteine 66/cysteine 104, cysteine 73/cysteine 97, and cysteine 91/cysteine 102. A propeptide spanning residues 78-83 is cleaved from the precursor; the sequence is DVYTYR. Glutamine 84 is subject to Pyrrolidone carboxylic acid. Positions 119 to 124 are excised as a propeptide; sequence YNHKYW.

Belongs to the phospholipase A2 family. Group II subfamily. D49 sub-subfamily. In terms of assembly, heterodimer of an acidic subunit and a basic chain. The acidic subunit is non-toxic, without enzymatic activity and comprises 3 peptides that are cross-linked by 7 disulfide bridges. The basic subunit is toxic, has phospholipase A2 activity and is composed of a single chain. Expressed by the venom gland.

The protein localises to the secreted. In terms of biological role, snake venom phospholipase A2 (PLA2) that inhibits neuromuscular transmission by blocking acetylcholine release from the nerve termini. This Sistrurus tergeminus (Western massasauga) protein is Acidic phospholipase A2 homolog sistruxin A.